A 120-amino-acid chain; its full sequence is Small ribosomal subunit protein bS6 (120 aa).

The segment covering 97–112 (SNEPSPILKNQSTENT) has biased composition (polar residues). A disordered region spans residues 97-120 (SNEPSPILKNQSTENTPVIDVTAN).

This sequence belongs to the bacterial ribosomal protein bS6 family.

Binds together with bS18 to 16S ribosomal RNA. This Rickettsia bellii (strain RML369-C) protein is Small ribosomal subunit protein bS6.